A 338-amino-acid chain; its full sequence is Phenylalanine--tRNA ligase alpha subunit (338 aa).

The tract at residues Gln71–Gln101 is disordered. A compositionally biased stretch (low complexity) spans Ser78–Leu92. Position 253 (Glu253) interacts with Mg(2+).

Belongs to the class-II aminoacyl-tRNA synthetase family. Phe-tRNA synthetase alpha subunit type 1 subfamily. As to quaternary structure, tetramer of two alpha and two beta subunits. Requires Mg(2+) as cofactor.

The protein resides in the cytoplasm. The enzyme catalyses tRNA(Phe) + L-phenylalanine + ATP = L-phenylalanyl-tRNA(Phe) + AMP + diphosphate + H(+). The chain is Phenylalanine--tRNA ligase alpha subunit from Desulfotalea psychrophila (strain LSv54 / DSM 12343).